We begin with the raw amino-acid sequence, 153 residues long: MMILVFWSNYPYEPVCLASHRNNMEASVPKYKKHLPQLGMQKEMEQDVKRFGQAAWATAIPRLEKLKLMLAQETLQLMRAKELCLNHKRAEIQGKMEDLPEQEKNINVVDELAIQFYEIQLELYEVKFEILKNKEILLTTQLDSLERLIKDEI.

Residues 113 to 151 (AIQFYEIQLELYEVKFEILKNKEILLTTQLDSLERLIKD) are a coiled coil.

This Homo sapiens (Human) protein is Putative WASP homolog-associated protein with actin, membranes and microtubules-like protein 1 (WHAMMP3).